The primary structure comprises 505 residues: N-succinylglutamate 5-semialdehyde dehydrogenase (505 aa).

Residue 234-239 coordinates NAD(+); the sequence is GSAHTG. Catalysis depends on residues Glu-257 and Cys-291.

The protein belongs to the aldehyde dehydrogenase family. AstD subfamily.

It carries out the reaction N-succinyl-L-glutamate 5-semialdehyde + NAD(+) + H2O = N-succinyl-L-glutamate + NADH + 2 H(+). It participates in amino-acid degradation; L-arginine degradation via AST pathway; L-glutamate and succinate from L-arginine: step 4/5. Catalyzes the NAD-dependent reduction of succinylglutamate semialdehyde into succinylglutamate. The chain is N-succinylglutamate 5-semialdehyde dehydrogenase from Yersinia pestis bv. Antiqua (strain Antiqua).